A 32-amino-acid chain; its full sequence is DQDEGVSTEPTQVGPAELHNDETCVGPLVYRN.

Positions 1–32 (DQDEGVSTEPTQVGPAELHNDETCVGPLVYRN) are disordered. Thr11 carries an O-linked (GalNAc...) threonine glycan. The region spanning 19–32 (HNDETCVGPLVYRN) is the Fibronectin type-II domain.

It belongs to the seminal plasma protein family. In terms of assembly, homodimer.

Its subcellular location is the secreted. Functionally, could enhance the fertilizing capacity of bull spermatozoa upon interaction with heparin-like glycosaminoglycans present in the female genital tract. Exhibits both simulatory and inhibitory actions on the release of pituitary gonadotropins. Binds to heparin and gelatin. The chain is Seminal plasma protein PDC-109 from Bos indicus (Zebu).